Consider the following 321-residue polypeptide: Beta-ketoacyl-[acyl-carrier-protein] synthase III (321 aa).

Catalysis depends on residues C113 and H248. The segment at 249-253 (QANAR) is ACP-binding. N278 is a catalytic residue.

This sequence belongs to the thiolase-like superfamily. FabH family. In terms of assembly, homodimer.

The protein localises to the cytoplasm. The catalysed reaction is malonyl-[ACP] + acetyl-CoA + H(+) = 3-oxobutanoyl-[ACP] + CO2 + CoA. The protein operates within lipid metabolism; fatty acid biosynthesis. In terms of biological role, catalyzes the condensation reaction of fatty acid synthesis by the addition to an acyl acceptor of two carbons from malonyl-ACP. Catalyzes the first condensation reaction which initiates fatty acid synthesis and may therefore play a role in governing the total rate of fatty acid production. Possesses both acetoacetyl-ACP synthase and acetyl transacylase activities. Its substrate specificity determines the biosynthesis of branched-chain and/or straight-chain of fatty acids. The chain is Beta-ketoacyl-[acyl-carrier-protein] synthase III from Erythrobacter litoralis (strain HTCC2594).